A 317-amino-acid chain; its full sequence is Acetyl-coenzyme A carboxylase carboxyl transferase subunit beta (317 aa).

The disordered stretch occupies residues 1 to 28; the sequence is MANNMTDTMTKPDINNDSTSLQQNGNKA. Residues 55 to 317 form the CoA carboxyltransferase N-terminal domain; sequence PSTKCSSCHS…LCSVPNVDVQ (263 aa). 4 residues coordinate Zn(2+): C59, C62, C78, and C81. The segment at 59 to 81 adopts a C4-type zinc-finger fold; sequence CSSCHSIITNTALIFNCYVCPHC.

This sequence belongs to the AccD/PCCB family. Acetyl-CoA carboxylase is a heterohexamer composed of biotin carboxyl carrier protein (AccB), biotin carboxylase (AccC) and two subunits each of ACCase subunit alpha (AccA) and ACCase subunit beta (AccD). It depends on Zn(2+) as a cofactor.

Its subcellular location is the cytoplasm. The catalysed reaction is N(6)-carboxybiotinyl-L-lysyl-[protein] + acetyl-CoA = N(6)-biotinyl-L-lysyl-[protein] + malonyl-CoA. The protein operates within lipid metabolism; malonyl-CoA biosynthesis; malonyl-CoA from acetyl-CoA: step 1/1. In terms of biological role, component of the acetyl coenzyme A carboxylase (ACC) complex. Biotin carboxylase (BC) catalyzes the carboxylation of biotin on its carrier protein (BCCP) and then the CO(2) group is transferred by the transcarboxylase to acetyl-CoA to form malonyl-CoA. This Psychrobacter cryohalolentis (strain ATCC BAA-1226 / DSM 17306 / VKM B-2378 / K5) protein is Acetyl-coenzyme A carboxylase carboxyl transferase subunit beta.